We begin with the raw amino-acid sequence, 236 residues long: MAELDAQTIINYISNAPKKTPVKVYLKGNLGDLEFPAEVETFLEQHTGVIFGDWTVIEPLLKEYSSAIESYHVENDARNSAVPLLDLKNINARIEPGAIIRDKVLIGDNAVIMMGATINIGAEIGADSMIDMGAVLGGRAIVGRHCHIGAGTVLAGVVEPASAEPVRIDDNVMVGANAVVIEGVHVGEGAVIAAGAIVTHDVAPHTMVAGVPAKFIKNVDDQTAGKTELEDDLRKL.

The protein belongs to the transferase hexapeptide repeat family. DapH subfamily.

It catalyses the reaction (S)-2,3,4,5-tetrahydrodipicolinate + acetyl-CoA + H2O = L-2-acetamido-6-oxoheptanedioate + CoA. It participates in amino-acid biosynthesis; L-lysine biosynthesis via DAP pathway; LL-2,6-diaminopimelate from (S)-tetrahydrodipicolinate (acetylase route): step 1/3. Functionally, catalyzes the transfer of an acetyl group from acetyl-CoA to tetrahydrodipicolinate. This is 2,3,4,5-tetrahydropyridine-2,6-dicarboxylate N-acetyltransferase from Limosilactobacillus reuteri (strain DSM 20016) (Lactobacillus reuteri).